The following is a 166-amino-acid chain: 3-isopropylmalate dehydratase small subunit (166 aa).

Belongs to the LeuD family. LeuD type 2 subfamily. Heterodimer of LeuC and LeuD.

The catalysed reaction is (2R,3S)-3-isopropylmalate = (2S)-2-isopropylmalate. The protein operates within amino-acid biosynthesis; L-leucine biosynthesis; L-leucine from 3-methyl-2-oxobutanoate: step 2/4. In terms of biological role, catalyzes the isomerization between 2-isopropylmalate and 3-isopropylmalate, via the formation of 2-isopropylmaleate. The protein is 3-isopropylmalate dehydratase small subunit of Nautilia profundicola (strain ATCC BAA-1463 / DSM 18972 / AmH).